Reading from the N-terminus, the 540-residue chain is Pentatricopeptide repeat-containing protein At1g14470 (540 aa).

14 PPR repeats span residues 70 to 104 (NVFV…GIMP), 105 to 134 (DAFS…GFFK), 135 to 165 (DPYV…ISQR), 166 to 196 (KGSD…MPEN), 197 to 227 (DVVS…MPEK), 228 to 262 (SVVS…GVRP), 263 to 297 (NETT…RVRL), 298 to 328 (NCFV…LGTQ), 330 to 364 (NLVT…NVVS), 365 to 395 (WNSL…GDSK), 397 to 431 (DEVT…QIKL), 432 to 462 (NDSG…MKER), 463 to 497 (DVVS…GIEP), and 498 to 528 (DRVT…IRNP).

It belongs to the PPR family. PCMP-A subfamily.

The protein is Pentatricopeptide repeat-containing protein At1g14470 (PCMP-A4) of Arabidopsis thaliana (Mouse-ear cress).